Here is a 252-residue protein sequence, read N- to C-terminus: Geranylgeranylglyceryl phosphate synthase (252 aa).

Residues aspartate 22 and serine 51 each contribute to the Mg(2+) site. Sn-glycerol 1-phosphate contacts are provided by residues 170–176, 201–202, and 223–224; these read YFEAGSG, GG, and GS.

This sequence belongs to the GGGP/HepGP synthase family. Group II subfamily. Mg(2+) is required as a cofactor.

The protein localises to the cytoplasm. The catalysed reaction is sn-glycerol 1-phosphate + (2E,6E,10E)-geranylgeranyl diphosphate = sn-3-O-(geranylgeranyl)glycerol 1-phosphate + diphosphate. It participates in membrane lipid metabolism; glycerophospholipid metabolism. Its function is as follows. Prenyltransferase that catalyzes the transfer of the geranylgeranyl moiety of geranylgeranyl diphosphate (GGPP) to the C3 hydroxyl of sn-glycerol-1-phosphate (G1P). This reaction is the first ether-bond-formation step in the biosynthesis of archaeal membrane lipids. The polypeptide is Geranylgeranylglyceryl phosphate synthase (Thermoplasma volcanium (strain ATCC 51530 / DSM 4299 / JCM 9571 / NBRC 15438 / GSS1)).